Consider the following 427-residue polypeptide: MSFDINWNQLTIDDTINQSIKEFLDQQFKNISLPSFISNLAVTDFNLGEIPPEVTIRHIGDPFEEFYEDENILGAMNEANNDSKDEHLKNHGDGINKDSGYNSQNLDDEDEDDEDDDEDDEDEEEEDEDDYDDHDLGTINEGISLLNFNENSTTPSANSFAGSAAPPLPPPLNPSRDSFHSILHPYGVNSIIGATGAGSETPTNILNQNYLSSRVLPKISVKQKQPHHDDNDIQLIVEINYKGDMHINLLVNLLVNYPSPNFISLPIKLHITDIVIHSIATIAYLKKSVFLSFLCDVDDTFPDFDSNVQTPTSTTGGNFVDYYSNDATINKERIDIVKKIKIESEIGEVENNILRNVGKVEKFLVEQLRNILRDEIAWPSWICIDMNDDDDEEEEEESEDNDGGNSDLNDNDGKHGDGRTDETEAGE.

Positions 1–387 (MSFDINWNQL…WPSWICIDMN (387 aa)) constitute an SMP-LTD domain. A compositionally biased stretch (basic and acidic residues) spans 81–96 (NDSKDEHLKNHGDGIN). Disordered stretches follow at residues 81 to 168 (NDSK…APPL) and 387 to 427 (NDDD…EAGE). A compositionally biased stretch (acidic residues) spans 106-133 (LDDEDEDDEDDDEDDEDEEEEDEDDYDD). A compositionally biased stretch (polar residues) spans 146–161 (LNFNENSTTPSANSFA). The segment covering 387 to 402 (NDDDDEEEEEESEDND) has biased composition (acidic residues). Residues 411–427 (NDGKHGDGRTDETEAGE) are compositionally biased toward basic and acidic residues.

Belongs to the MDM12 family. Component of the ER-mitochondria encounter structure (ERMES) or MDM complex, composed of MMM1, MDM10, MDM12 and MDM34. An MMM1 homodimer associates with one molecule of MDM12 on each side in a pairwise head-to-tail manner, and the SMP-LTD domains of MMM1 and MDM12 generate a continuous hydrophobic tunnel for phospholipid trafficking.

Its subcellular location is the mitochondrion outer membrane. It localises to the endoplasmic reticulum membrane. Its function is as follows. Component of the ERMES/MDM complex, which serves as a molecular tether to connect the endoplasmic reticulum (ER) and mitochondria. Components of this complex are involved in the control of mitochondrial shape and protein biogenesis, and function in nonvesicular lipid trafficking between the ER and mitochondria. MDM12 is required for the interaction of the ER-resident membrane protein MMM1 and the outer mitochondrial membrane-resident beta-barrel protein MDM10. The MDM12-MMM1 subcomplex functions in the major beta-barrel assembly pathway that is responsible for biogenesis of all mitochondrial outer membrane beta-barrel proteins, and acts in a late step after the SAM complex. The MDM10-MDM12-MMM1 subcomplex further acts in the TOM40-specific pathway after the action of the MDM12-MMM1 complex. Essential for establishing and maintaining the structure of mitochondria and maintenance of mtDNA nucleoids. The chain is Mitochondrial distribution and morphology protein 12 from Candida albicans (strain WO-1) (Yeast).